Consider the following 255-residue polypeptide: NADH dehydrogenase [ubiquinone] flavoprotein 2, mitochondrial (255 aa).

The transit peptide at 1–35 (MLARLAAKRLLEIRQVFRQPTSQVTRSLSTALNYH) directs the protein to the mitochondrion. Positions 130, 135, 171, and 175 each coordinate [2Fe-2S] cluster. A disordered region spans residues 214 to 255 (RKGEKPPHGTQNPKRIKCGPEGGNKTLLGEPKPPQFRDLDAC).

This sequence belongs to the complex I 24 kDa subunit family. Complex I is composed of at least 49 different subunits. This is a component of the flavoprotein-sulfur (FP) fragment of the enzyme. [2Fe-2S] cluster serves as cofactor.

It is found in the mitochondrion inner membrane. It carries out the reaction a ubiquinone + NADH + 5 H(+)(in) = a ubiquinol + NAD(+) + 4 H(+)(out). In terms of biological role, core subunit of the mitochondrial membrane respiratory chain NADH dehydrogenase (Complex I) that is believed to belong to the minimal assembly required for catalysis. Complex I functions in the transfer of electrons from NADH to the respiratory chain. The immediate electron acceptor for the enzyme is believed to be ubiquinone. The sequence is that of NADH dehydrogenase [ubiquinone] flavoprotein 2, mitochondrial from Arabidopsis thaliana (Mouse-ear cress).